Here is a 356-residue protein sequence, read N- to C-terminus: cGAMP-activated phospholipase (356 aa).

Residues 15 to 206 form the PNPLA domain; it reads LSLNGGGARG…VANNPSYIGL (192 aa). Positions 19–24 match the GXGXXG motif; the sequence is GGGARG. Residues 58 to 62 carry the GXSXG motif; sequence GTSIG. The active-site Nucleophile is the Ser-60. Catalysis depends on Asp-193, which acts as the Proton acceptor. A DGA/G motif is present at residues 193 to 195; that stretch reads DGG.

This sequence belongs to the patatin family.

The catalysed reaction is a 1,2-diacyl-sn-glycero-3-phosphocholine + H2O = a 2-acyl-sn-glycero-3-phosphocholine + a fatty acid + H(+). The enzyme catalyses 1,2-di-(9Z-octadecenoyl)-sn-glycero-3-phosphoethanolamine + 2 H2O = sn-glycero-3-phosphoethanolamine + 2 (9Z)-octadecenoate + 2 H(+). Its activity is regulated as follows. Phospholipase activity is specifically activated upon 3',3'-cGAMP binding, which is produced by the cognate cyclic nucleotide synthase encoded in the same operon. Functionally, effector phospholipase of a CBASS antiviral system. CBASS (cyclic oligonucleotide-based antiphage signaling system) provides immunity against bacteriophages. The CD-NTase protein (DncV) synthesizes cyclic nucleotides in response to infection; these serve as specific second messenger signals. The signals activate a diverse range of effectors, leading to bacterial cell death and thus abortive phage infection. A type II-A(GA) CBASS system. In terms of biological role, phospholipase that is activated upon binding to the cyclic dinucleotide (CDN) second messenger 3',3'-cyclic GMP-AMP (cGAMP). Degrades phospholipids in the cell membrane. Its function is as follows. Protects E.coli against phage infection. When capV and dncV are introduced in E.coli MG1655 there is 1000-fold protection against phage P1; protection against other phage (T2, T4, T5, T6 and lambda-vir) requires the 2 subsequent genes (cap2 and cap3). Upon P1 phage infection the activating molecule is produced between 30 and 40 minutes. Activation leads to bacterial cell lysis and death, which occurs before the phage has finished its replication cycle, thus protecting non-infected bacteria by aborting the phage infection and preventing its propagation. In another paper the capV-dncV-cap2-cap3 operon gives 10(4)-10(5)-fold protection against phages lambda, T2, T4 and T6, about 1000-fold protection against P1 and 10-fold protection against T5. The polypeptide is cGAMP-activated phospholipase (Escherichia coli (strain TW11681)).